The following is a 189-amino-acid chain: MAKVNLEQIEHAVRLILEAIGDDPNREGVLDTPKRVAKMYAEVFSGMHEDPKEHLHKVFGEDHEELVLVKDIPFYSMCEHHLVPFYGVAHVAYIPQGGKVTGLSKLARTVDTIARRPQLQERITSTVANSIMEVLEPHGVMVVVEAEHMCMTMRGVKKPGAKTVTTAVRGVLENDAAARSEILSFIKTN.

Cysteine 78, histidine 81, and cysteine 150 together coordinate Zn(2+).

It belongs to the GTP cyclohydrolase I family. As to quaternary structure, homomer.

It carries out the reaction GTP + H2O = 7,8-dihydroneopterin 3'-triphosphate + formate + H(+). Its pathway is cofactor biosynthesis; 7,8-dihydroneopterin triphosphate biosynthesis; 7,8-dihydroneopterin triphosphate from GTP: step 1/1. This chain is GTP cyclohydrolase 1, found in Bacillus mycoides (strain KBAB4) (Bacillus weihenstephanensis).